Here is a 1351-residue protein sequence, read N- to C-terminus: ABC transporter C family member 6 (1351 aa).

Positions 112–397 constitute an ABC transmembrane type-1 1 domain; that stretch reads NKYALVSNLF…LPYDIFKAIG (286 aa). The next 3 membrane-spanning stretches (helical) occupy residues 120–140, 149–169, and 248–268; these read LFIIIFTFLSPICLKFLINYI, SILKGILLCCLLCLCVLGQSI, and LLCYVVGPSGLVGFGVMVIAL. In terms of domain architecture, ABC transporter 1 spans 474-700; it reads NQDESINKKE…GIDFKSILKT (227 aa). 510–517 provides a ligand contact to ATP; it reads GVVGSGKT. Residues 701–734 adopt a coiled-coil conformation; that stretch reads KEIKKNVENETDSEELIKNEIEIENEIIDVNNAI. 6 helical membrane-spanning segments follow: residues 771-791, 815-835, 904-924, 977-999, 1002-1022, and 1025-1045; these read GSSGVTLFITISLFFVGQAIF, IGYYLLIFGTFVVILMIRILL, LISIVFIIPIMVIPLIILSIA, MFDNININLGCFFYSFAVHRWVS, LEVMGWIMVFFTSLIATLFIS, and GLAALSVTTALSLNGYLSWGI. Residues 777–1060 enclose the ABC transmembrane type-1 2 domain; that stretch reads LFITISLFFV…LEVKMNSFQR (284 aa). The region spanning 1101–1336 is the ABC transporter 2 domain; sequence IEFKNVEIKY…PNSKFNKLIK (236 aa). 1135–1142 contributes to the ATP binding site; sequence GRTGAGKT.

This sequence belongs to the ABC transporter superfamily. ABCC family. Conjugate transporter (TC 3.A.1.208) subfamily.

The protein resides in the membrane. The chain is ABC transporter C family member 6 (abcC6) from Dictyostelium discoideum (Social amoeba).